Reading from the N-terminus, the 315-residue chain is Probable cell division protein WhiA (315 aa).

The segment at residues 274–308 (SLKNLGELIPGGPISKSGINHRLRKLNEIAEKIRA) is a DNA-binding region (H-T-H motif).

It belongs to the WhiA family.

Involved in cell division and chromosome segregation. This is Probable cell division protein WhiA from Ligilactobacillus salivarius (strain UCC118) (Lactobacillus salivarius).